A 133-amino-acid polypeptide reads, in one-letter code: Large ribosomal subunit protein eL14 (133 aa).

It belongs to the eukaryotic ribosomal protein eL14 family.

The sequence is that of Large ribosomal subunit protein eL14 (RPL14) from Griffithsia japonica (Red alga).